The following is a 588-amino-acid chain: Aspartate--tRNA ligase (588 aa).

Glu-177 serves as a coordination point for L-aspartate. The segment at 201–204 (QLFK) is aspartate. An L-aspartate-binding site is contributed by Arg-223. ATP is bound by residues 223-225 (RDE) and Gln-232. Position 451 (His-451) interacts with L-aspartate. Residue Glu-485 participates in ATP binding. Arg-492 is a binding site for L-aspartate. 537–540 (GLDR) contacts ATP.

Belongs to the class-II aminoacyl-tRNA synthetase family. Type 1 subfamily. In terms of assembly, homodimer.

Its subcellular location is the cytoplasm. The enzyme catalyses tRNA(Asp) + L-aspartate + ATP = L-aspartyl-tRNA(Asp) + AMP + diphosphate. Catalyzes the attachment of L-aspartate to tRNA(Asp) in a two-step reaction: L-aspartate is first activated by ATP to form Asp-AMP and then transferred to the acceptor end of tRNA(Asp). The polypeptide is Aspartate--tRNA ligase (Staphylococcus aureus (strain MRSA252)).